The sequence spans 434 residues: Putative polysaccharide biosynthesis protein with aminopeptidase-like domain (434 aa).

Aminopeptidase-like stretches follow at residues 1–55 and 57–355; these read MEEI…IHEV and SGTK…IENN. The interval 56-164 is insert; sequence KSGTKVFDWT…VVIDSSLEDG (109 aa). Zn(2+)-binding residues include H189, D195, and H324. A permutated winged helix-turn-helix region spans residues 356–434; it reads RTYLNLNPKC…LYRVELLKLV (79 aa).

This sequence belongs to the UPF0770 family. In terms of assembly, homotrimer. The cofactor is Zn(2+).

The genomic context suggests a role in the biosynthesis of modified polysaccharides; this association with genes involved in carbohydrate metabolism is observed in several phylogenetically distinct taxa. Is not expected to have peptidase activity despite low similarity to aminopeptidases. The sequence is that of Putative polysaccharide biosynthesis protein with aminopeptidase-like domain from Clostridium acetobutylicum (strain ATCC 824 / DSM 792 / JCM 1419 / IAM 19013 / LMG 5710 / NBRC 13948 / NRRL B-527 / VKM B-1787 / 2291 / W).